The sequence spans 121 residues: Ribonuclease P protein component (121 aa).

The protein belongs to the RnpA family. Consists of a catalytic RNA component (M1 or rnpB) and a protein subunit.

It catalyses the reaction Endonucleolytic cleavage of RNA, removing 5'-extranucleotides from tRNA precursor.. Functionally, RNaseP catalyzes the removal of the 5'-leader sequence from pre-tRNA to produce the mature 5'-terminus. It can also cleave other RNA substrates such as 4.5S RNA. The protein component plays an auxiliary but essential role in vivo by binding to the 5'-leader sequence and broadening the substrate specificity of the ribozyme. The protein is Ribonuclease P protein component of Neisseria meningitidis serogroup A / serotype 4A (strain DSM 15465 / Z2491).